The chain runs to 579 residues: 2-isopropylmalate synthase (579 aa).

The region spanning 40–314 (PRWCAVDLRD…DPMIDFSDID (275 aa)) is the Pyruvate carboxyltransferase domain. Mg(2+)-binding residues include Asp49, His253, His255, and Asn289. The interval 456–579 (SSKEDGQWGR…VNRAIRDAQA (124 aa)) is regulatory domain.

The protein belongs to the alpha-IPM synthase/homocitrate synthase family. LeuA type 2 subfamily. Homodimer. Requires Mg(2+) as cofactor.

The protein resides in the cytoplasm. The enzyme catalyses 3-methyl-2-oxobutanoate + acetyl-CoA + H2O = (2S)-2-isopropylmalate + CoA + H(+). Its pathway is amino-acid biosynthesis; L-leucine biosynthesis; L-leucine from 3-methyl-2-oxobutanoate: step 1/4. In terms of biological role, catalyzes the condensation of the acetyl group of acetyl-CoA with 3-methyl-2-oxobutanoate (2-ketoisovalerate) to form 3-carboxy-3-hydroxy-4-methylpentanoate (2-isopropylmalate). This is 2-isopropylmalate synthase from Arthrobacter sp. (strain FB24).